A 277-amino-acid chain; its full sequence is Probable endonuclease 4 (277 aa).

Residues H67, H107, E142, D176, H179, H211, D224, H226, and E256 each coordinate Zn(2+).

Belongs to the AP endonuclease 2 family. Requires Zn(2+) as cofactor.

It catalyses the reaction Endonucleolytic cleavage to 5'-phosphooligonucleotide end-products.. In terms of biological role, endonuclease IV plays a role in DNA repair. It cleaves phosphodiester bonds at apurinic or apyrimidinic (AP) sites, generating a 3'-hydroxyl group and a 5'-terminal sugar phosphate. This Akkermansia muciniphila (strain ATCC BAA-835 / DSM 22959 / JCM 33894 / BCRC 81048 / CCUG 64013 / CIP 107961 / Muc) protein is Probable endonuclease 4.